The sequence spans 264 residues: Thiamine pyrophosphokinase 1 (264 aa).

A compositionally biased stretch (polar residues) spans M1–F12. The segment at M1–D27 is disordered.

The protein belongs to the thiamine pyrophosphokinase family.

The protein resides in the cytoplasm. It is found in the cytosol. The catalysed reaction is thiamine + ATP = thiamine diphosphate + AMP + H(+). It functions in the pathway cofactor biosynthesis; thiamine diphosphate biosynthesis; thiamine diphosphate from thiamine: step 1/1. Its function is as follows. Catalyzes the phosphorylation of thiamine to thiamine pyrophosphate (TPP). TPP is an active cofactor for enzymes involved in glycolysis and energy production. Plant leaves require high levels of TPP for photosynthesis and carbohydrate metabolism. The protein is Thiamine pyrophosphokinase 1 (TPK1) of Oryza sativa subsp. japonica (Rice).